Reading from the N-terminus, the 331-residue chain is MPTGCSDTYPRLIGDIGGTHARFAVIDSPGSPPTRFRTLCCDDHAGLLEAVQAYLLLERGLAGPRVAAFGIANPVEGDRVRMTNHDWSFSIEQLRIELGLARLVVLNDFTALALSLPRLQAGERRQIGGGNECAGRPVALIGPGTGLGVSGLVRCGNGYAPLEGEGGHVTLAASTPREAELIAVLAARFDHVSAERALSGPGLIALHDAIRQLAGAPPLALEADEISARAMAASCPWCAEALQVFCGMLGSVAGDLALTLGAFGGVYIGGGIVPKLGDFFDRSDFRRRFEQKGRFSEYLARIPCYVILAEYPALLGAATALDNALAGETGT.

Position 14–19 (14–19 (GDIGGT)) interacts with ATP.

Belongs to the bacterial glucokinase family.

The protein resides in the cytoplasm. It catalyses the reaction D-glucose + ATP = D-glucose 6-phosphate + ADP + H(+). This is Glucokinase from Aromatoleum aromaticum (strain DSM 19018 / LMG 30748 / EbN1) (Azoarcus sp. (strain EbN1)).